The chain runs to 105 residues: UPF0473 protein SAK_2028 (105 aa).

Belongs to the UPF0473 family.

The polypeptide is UPF0473 protein SAK_2028 (Streptococcus agalactiae serotype Ia (strain ATCC 27591 / A909 / CDC SS700)).